The chain runs to 625 residues: DNA-directed RNA polymerase subunit gamma (625 aa).

The Zn(2+) site is built by cysteine 71, cysteine 73, cysteine 86, and cysteine 89. Residues aspartate 467, aspartate 469, and aspartate 471 each contribute to the Mg(2+) site.

The protein belongs to the RNA polymerase beta' chain family. RpoC1 subfamily. In cyanobacteria the RNAP catalytic core is composed of 2 alpha, 1 beta, 1 beta', 1 gamma and 1 omega subunit. When a sigma factor is associated with the core the holoenzyme is formed, which can initiate transcription. It depends on Mg(2+) as a cofactor. Zn(2+) is required as a cofactor.

It carries out the reaction RNA(n) + a ribonucleoside 5'-triphosphate = RNA(n+1) + diphosphate. Its function is as follows. DNA-dependent RNA polymerase catalyzes the transcription of DNA into RNA using the four ribonucleoside triphosphates as substrates. The protein is DNA-directed RNA polymerase subunit gamma of Nostoc punctiforme (strain ATCC 29133 / PCC 73102).